Consider the following 148-residue polypeptide: MKVIFTQDVKGKGKKGEVKEVPVGYANNFLLKKNYAVEATPGNLKQLELQKKRAKQERQQEIEDAKALKETLSNIEVEVSAKTGEGGKLFGSVSTKQIAEALKTQHDIKIDKRKMDLPNGIHSLGYTNVPVKLDKEVEGTIRVHTVEQ.

Belongs to the bacterial ribosomal protein bL9 family.

Functionally, binds to the 23S rRNA. This is Large ribosomal subunit protein bL9 from Staphylococcus aureus (strain bovine RF122 / ET3-1).